The chain runs to 124 residues: Small ribosomal subunit protein eS6 (124 aa).

The protein belongs to the eukaryotic ribosomal protein eS6 family.

This is Small ribosomal subunit protein eS6 from Methanococcus maripaludis (strain DSM 14266 / JCM 13030 / NBRC 101832 / S2 / LL).